We begin with the raw amino-acid sequence, 418 residues long: Protein YdhQ (418 aa).

In Escherichia coli (strain K12), this protein is Protein YdhQ (ydhQ).